The following is a 554-amino-acid chain: Glypican-1 (554 aa).

The first 21 residues, 1 to 21, serve as a signal peptide directing secretion; sequence MERLCWGWWWHLGILCLMHWA. 7 disulfide bridges follow: C32/C68, C62/C256, C69/C259, C191/C343, C246/C279, C268/C415, and C272/C401. Residues N79 and N116 are each glycosylated (N-linked (GlcNAc...) asparagine). The segment at 346–369 is disordered; it reads PKKTNKGSKSEERRRKGKATQEDK. The span at 353–369 shows a compositional bias: basic and acidic residues; that stretch reads SKSEERRRKGKATQEDK. 3 O-linked (Xyl...) (heparan sulfate) serine glycosylation sites follow: S486, S488, and S490.

The protein belongs to the glypican family. Post-translationally, O-glycosylated with heparan sulfate side chains.

Its subcellular location is the cell membrane. It localises to the secreted. The protein resides in the extracellular space. In terms of biological role, cell surface proteoglycan that bears heparan sulfate. This is Glypican-1 (gpc1) from Xenopus tropicalis (Western clawed frog).